Here is a 378-residue protein sequence, read N- to C-terminus: Stimulator of interferon genes protein (378 aa).

The Cytoplasmic portion of the chain corresponds to 1–17; sequence MPYSSLHPSIPQPRGLR. The mediates interaction with ZDHHC1 and ZDHHC11 stretch occupies residues 1–190; that stretch reads MPYSSLHPSI…AYNQRHKNVL (190 aa). The helical transmembrane segment at 18 to 34 threads the bilayer; that stretch reads AQVAALVLLGACLVALW. At 35–44 the chain is on the lumenal side; that stretch reads GLGELPEYTL. The helical transmembrane segment at 45-69 threads the bilayer; it reads RWLVLHLASQQIGLLVKGLCSLAEE. Residues 70–91 lie on the Cytoplasmic side of the membrane; it reads LCHVHSRYQSSYWRAARACLGC. 2 S-palmitoyl cysteine lipidation sites follow: C88 and C91. Residues 92 to 106 traverse the membrane as a helical segment; that stretch reads PIRCGALLLLSCYFY. The Lumenal portion of the chain corresponds to 107–116; it reads FSIRDKAGLP. A helical transmembrane segment spans residues 117-134; the sequence is LPWMLALLGLSQALNILL. Residues 135 to 378 lie on the Cytoplasmic side of the membrane; it reads GLQHLAPAEV…QPLPLRSDIF (244 aa). K150 participates in a covalent cross-link: Glycyl lysine isopeptide (Lys-Gly) (interchain with G-Cter in ubiquitin). A cyclic dinucleotide-binding domain (CBD) region spans residues 153–339; that stretch reads FNVAHGLAWS…LRHLRQEERE (187 aa). Positions 162 and 167 each coordinate 2',3'-cGAMP. 3',3'-c-di-GMP-binding residues include S162 and Y167. Residue Y167 coordinates 2',3'-cUAMP. K236 participates in a covalent cross-link: Glycyl lysine isopeptide (Lys-Gly) (interchain with G-Cter in ubiquitin). Residues R238 and T263 each contribute to the 2',3'-cGAMP site. Residues R238 and T263 each contribute to the 2',3'-cUAMP site. Residues 238–241 and T263 contribute to the 3',3'-c-di-GMP site; that span reads RVYT. The C-terminal tail (CTT) stretch occupies residues 339–378; that stretch reads EVTMGSAETSVVPTSSTLSQEPELLISGMEQPLPLRSDIF. The residue at position 354 (S354) is a Phosphoserine. Position 355 is a phosphothreonine (T355). 2 positions are modified to phosphoserine; by TBK1: S357 and S365. A pLxIS motif motif is present at residues 362–365; the sequence is LLIS.

It belongs to the STING family. Homodimer; forms a homodimer in absence of cyclic nucleotide (c-di-GMP or cGAMP); 'Lys-63'-linked ubiquitination at Lys-150 is required for homodimerization. Homotetramer; in presence of cyclic nucleotide (c-di-GMP or cGAMP), forms tetramers and higher-order oligomers through side-by-side packing. Interacts (when phosphorylated) with IRF3; following activation and phosphorylation on the pLxIS motif by TBK1, recruits IRF3. Interacts with DDX58/RIG-I, MAVS and SSR2. Interacts with RNF5 and TRIM56. Interacts with TBK1; when homodimer, leading to subsequent production of IFN-beta. Interacts with IFIT1 and IFIT2. Interacts with TRIM29; this interaction induces STING1 ubiquitination and subsequent degradation. Associates with the MHC-II complex. Interacts with STEEP1; interaction takes place upon cGAMP-activation and STING1 phosphorylation by MAP3K7/TAK1 and promotes STING1 translocation to COPII vesicles. Interacts with SEC24A, SEC24B and SEC24C; promoting translocation to COPII vesicles. Interacts (when ubiquitinated) with SQSTM1; leading to relocalization to autophagosomes. Interacts with SURF4. Interacts with HNRNPA2B1. Interacts with ZDHHC1; ZDHHC1 constitutively interacts with STING1 and in presence of DNA viruses activates it by promoting its cGAMP-induced oligomerization and the recruitment of downstream signaling components. Interacts with ZDHHC11; in presence of DNA viruses promotes the recruitment of IRF3 to STING1. Interacts with TOMM70. Interacts with TAB1; promoting recruitment of TAB1 to the endoplasmic reticulum membrane and subsequent activation of MAP3K7/TAK1. Interacts (via transmembrane domain) with TMEM203. Interacts with DDX41. As to quaternary structure, (Microbial infection) Interacts with African swine fever virus/ASFV protein A528R; this interaction mediates STING1 degradation. In terms of assembly, (Microbial infection) Interacts with African swine fever virus/ASFV minor capsid protein p17. (Microbial infection) Interacts with Pseudorabies virus protein UL13; this interaction mediates STING1 degradation in a RNF5-dependent manner. In terms of processing, phosphorylation by TBK1 leads to activation and production of IFN-beta. Following cyclic nucleotide (c-di-GMP or cGAMP)-binding, activation and translocation from the endoplasmic reticulum, STING1 is phosphorylated by TBK1 at Ser-365 in the pLxIS motif. The phosphorylated pLxIS motif constitutes an IRF3-binding motif, leading to recruitment of the transcription factor IRF3 to induce type-I interferons and other cytokines. Phosphorylated on tyrosine residues upon MHC-II aggregation. Dephosphorylation by PPP6C leads to inactivation and decreased production of IFN-beta. Phosphorylation at Ser-357 is also required to activate IRF3. Phosphorylation at Ser-354 by MAP3K7/TAK1 facilitates its interaction with STEEP1, promoting STING1 translocation to COPII vesicles. Post-translationally, ubiquitinated. Ubiquitinated via 'Lys-63'-linked ubiquitin chains in response to double-stranded DNA treatment, leading to relocalization to autophagosomes and subsequent degradation; this process is dependent on SQSTM1. 'Lys-63'-linked ubiquitination mediated by TRIM56 at Lys-150 promotes homodimerization and recruitment of the antiviral kinase TBK1 and subsequent production of IFN-beta. 'Lys-48'-linked polyubiquitination at Lys-150 occurring after viral infection is mediated by RNF5 and leads to proteasomal degradation. 'Lys-11'-linked polyubiquitination at Lys-150 by RNF26 leads to stabilize STING1: it protects STING1 from RNF5-mediated 'Lys-48'-linked polyubiquitination. 'Lys-33'-linked and 'Lys-48'-linked deubiquitinated by USP20; leading to its stabilization and promotion of innate antiviral response. 'Lys-48'-linked deubiquitinated by USP44; leading to its stabilization and promotion of innate antiviral response. Deubiquitinated by USP13; leading to inhibition of innate antiviral response. 'Lys-63'-linked deubiquitinated by USP49; leading to inhibition of the subsequent recruitment of TBK1 to the signaling complex. 'Lys-63'-linked ubiquitination mediated by RNF39 promotes the activation of the cGAS-STING pathway. Palmitoylation takes place in the Golgi apparatus and creates a platform for the recruitment of TBK1. In terms of tissue distribution, expressed at higher level in the spleen, lymph node, lung and bone marrow, followed by the small intestine, heart, liver and brain, and to a lesser extent in the stomach and kidney.

The protein localises to the endoplasmic reticulum membrane. The protein resides in the cytoplasm. It is found in the perinuclear region. It localises to the endoplasmic reticulum-Golgi intermediate compartment membrane. Its subcellular location is the golgi apparatus membrane. The protein localises to the cytoplasmic vesicle. The protein resides in the autophagosome membrane. It is found in the mitochondrion outer membrane. It localises to the cell membrane. It catalyses the reaction H(+)(in) = H(+)(out). Facilitator of innate immune signaling that acts as a sensor of cytosolic DNA from bacteria and viruses and promotes the production of type I interferon (IFN-alpha and IFN-beta). Innate immune response is triggered in response to non-CpG double-stranded DNA from viruses and bacteria delivered to the cytoplasm. Acts by binding cyclic dinucleotides: recognizes and binds cyclic di-GMP (c-di-GMP), a second messenger produced by bacteria, cyclic UMP-AMP (2',3'-cUAMP), and cyclic GMP-AMP (cGAMP), a messenger produced by CGAS in response to DNA virus in the cytosol. Upon binding to c-di-GMP, cUAMP or cGAMP, STING1 oligomerizes, translocates from the endoplasmic reticulum and is phosphorylated by TBK1 on the pLxIS motif, leading to recruitment and subsequent activation of the transcription factor IRF3 to induce expression of type I interferon and exert a potent anti-viral state. Exhibits 2',3' phosphodiester linkage-specific ligand recognition: can bind both 2'-3' linked cGAMP (2'-3'-cGAMP) and 3'-3' linked cGAMP but is preferentially activated by 2'-3' linked cGAMP. The preference for 2'-3'-cGAMP, compared to other linkage isomers is probably due to the ligand itself, whichs adopts an organized free-ligand conformation that resembles the STING1-bound conformation and pays low energy costs in changing into the active conformation. In addition to promote the production of type I interferons, plays a direct role in autophagy. Following cGAMP-binding, STING1 buds from the endoplasmic reticulum into COPII vesicles, which then form the endoplasmic reticulum-Golgi intermediate compartment (ERGIC). The ERGIC serves as the membrane source for WIPI2 recruitment and LC3 lipidation, leading to formation of autophagosomes that target cytosolic DNA or DNA viruses for degradation by the lysosome. Promotes autophagy by acting as a proton channel that directs proton efflux from the Golgi to facilitate MAP1LC3B/LC3B lipidation. The autophagy- and interferon-inducing activities can be uncoupled and autophagy induction is independent of TBK1 phosphorylation. Autophagy is also triggered upon infection by bacteria: following c-di-GMP-binding, which is produced by live Gram-positive bacteria, promotes reticulophagy. May be involved in translocon function, the translocon possibly being able to influence the induction of type I interferons. May be involved in transduction of apoptotic signals via its association with the major histocompatibility complex class II (MHC-II). The polypeptide is Stimulator of interferon genes protein (Sus scrofa (Pig)).